We begin with the raw amino-acid sequence, 396 residues long: Ribosomal RNA large subunit methyltransferase I (396 aa).

Residues 2-81 (SVRLVLAKGR…ESIDIAFFTR (80 aa)) form the PUA domain.

This sequence belongs to the methyltransferase superfamily. RlmI family.

It localises to the cytoplasm. It carries out the reaction cytidine(1962) in 23S rRNA + S-adenosyl-L-methionine = 5-methylcytidine(1962) in 23S rRNA + S-adenosyl-L-homocysteine + H(+). Functionally, specifically methylates the cytosine at position 1962 (m5C1962) of 23S rRNA. In Escherichia coli O127:H6 (strain E2348/69 / EPEC), this protein is Ribosomal RNA large subunit methyltransferase I.